Here is a 476-residue protein sequence, read N- to C-terminus: Probable G-protein coupled receptor No9 (476 aa).

Residues 1–36 (MEGPPLSPAPADNVTLNVSCGRPATLFDWADHRLIS) lie on the Extracellular side of the membrane. Asparagine 13 and asparagine 17 each carry an N-linked (GlcNAc...) asparagine glycan. Residues 37-60 (LLALAFLNLMVVAGNLLVVMAVFV) form a helical membrane-spanning segment. The Cytoplasmic portion of the chain corresponds to 61–69 (HSKLRTVTN). Residues 70–93 (LFIVSLACADLLVGMLVLPFSATL) form a helical membrane-spanning segment. Topologically, residues 94 to 103 (EVLDVWLYGD) are extracellular. Residues 104–127 (VWCSVWLAVDVWMCTSSILNLCAI) form a helical membrane-spanning segment. Cysteines 106 and 192 form a disulfide. Topologically, residues 128-152 (SLDRYLAVSQPISYPSLMSTRRAKQ) are cytoplasmic. A helical transmembrane segment spans residues 153 to 172 (LIAAVWVLSFVICFPPLVGW). Residues 173–200 (NDRPGTLIGSRGSSACRLTCELTNERGY) lie on the Extracellular side of the membrane. A helical membrane pass occupies residues 201–221 (VIYSALGSFFLPSTVMLFFYG). Over 222–375 (RIYRTAVSTT…FRMETKAAKT (154 aa)) the chain is Cytoplasmic. The segment covering 266 to 278 (AAAGGARAHGQVR) has biased composition (low complexity). Disordered stretches follow at residues 266-293 (AAAG…NKPS) and 317-351 (DSRP…PRFI). A helical transmembrane segment spans residues 376 to 396 (VGIIVGLFILCWLPFFVCYLV). Over 397 to 406 (RGFCADCVPP) the chain is Extracellular. A helical membrane pass occupies residues 407–430 (LLFSVFFWLGYCNSAVNPCVYALC). At 431-476 (SRDFRFAFSSILCKCVCRRGAMERRFRRTLLVGNRSQTEEDCEVAD) the chain is on the cytoplasmic side.

The protein belongs to the G-protein coupled receptor 1 family.

Its subcellular location is the cell membrane. Functionally, orphan G-protein coupled receptor. The sequence is that of Probable G-protein coupled receptor No9 from Amphibalanus amphitrite (Striped barnacle).